The sequence spans 243 residues: Exosome complex component Rrp41 (243 aa).

The protein belongs to the RNase PH family. Rrp41 subfamily. In terms of assembly, component of the archaeal exosome complex. Forms a hexameric ring-like arrangement composed of 3 Rrp41-Rrp42 heterodimers. The hexameric ring associates with a trimer of Rrp4 and/or Csl4 subunits.

The protein localises to the cytoplasm. Catalytic component of the exosome, which is a complex involved in RNA degradation. Has 3'-&gt;5' exoribonuclease activity. Can also synthesize heteromeric RNA-tails. The chain is Exosome complex component Rrp41 from Sulfolobus acidocaldarius (strain ATCC 33909 / DSM 639 / JCM 8929 / NBRC 15157 / NCIMB 11770).